A 116-amino-acid polypeptide reads, in one-letter code: MYAPLFVAIGGFFGAMARYLVSRWAARRSPRFPLGTLIVNLLGSFLLGWLAGSGAADAAKLLVGTGFMGAFTTFSTLKWESVQMMQQRQWAKVVVYLAATYLCGVWLAWLGYHVGR.

The next 4 membrane-spanning stretches (helical) occupy residues 1–21 (MYAPLFVAIGGFFGAMARYLV), 32–52 (FPLGTLIVNLLGSFLLGWLAG), 54–74 (GAADAAKLLVGTGFMGAFTTF), and 93–113 (VVVYLAATYLCGVWLAWLGYH). The Na(+) site is built by G69 and T72.

The protein belongs to the fluoride channel Fluc/FEX (TC 1.A.43) family.

It localises to the cell membrane. The catalysed reaction is fluoride(in) = fluoride(out). With respect to regulation, na(+) is not transported, but it plays an essential structural role and its presence is essential for fluoride channel function. Its function is as follows. Fluoride-specific ion channel. Important for reducing fluoride concentration in the cell, thus reducing its toxicity. The chain is Fluoride-specific ion channel FluC 1 from Geobacillus kaustophilus (strain HTA426).